We begin with the raw amino-acid sequence, 767 residues long: General transcription and DNA repair factor IIH helicase/translocase subunit XPB1 (767 aa).

Residues 1–51 form a disordered region; the sequence is MGNGERGRPNKKMKYGGKDDQKMKNIQNAEDYYDDADEDSRDGEGEEKKRD. The segment covering 31–41 has biased composition (acidic residues); it reads DYYDDADEDSR. The segment covering 42 to 51 has biased composition (basic and acidic residues); sequence DGEGEEKKRD. The 163-residue stretch at 293–455 folds into the Helicase ATP-binding domain; sequence MFGNGRARSG…DLNFLIGPKL (163 aa). 306–313 contacts ATP; it reads LPCGAGKS. The DEVH box motif lies at 408–411; the sequence is DEVH. The Helicase C-terminal domain maps to 510–676; it reads RACEFLIRFH…SLPPPDAGSS (167 aa). The tract at residues 742–767 is disordered; it reads RHKSGQQFKKPKDPTKRHNLFKKRYV. The short motif at 750 to 766 is the Nuclear localization signal element; sequence KKPKDPTKRHNLFKKRY. Positions 758 to 767 are enriched in basic residues; the sequence is RHNLFKKRYV.

The protein belongs to the helicase family. RAD25/XPB subfamily. As to quaternary structure, component of the 7-subunit TFIIH core complex composed of XPB, XPD, TFB1/GTF2H1, GTF2H2/P44, TFB4/GTF2H3, TFB2/GTF2H4 and TFB5/GTF2H5, which is active in NER. The core complex associates with the 3-subunit CDK-activating kinase (CAK) module composed of CYCH1/cyclin H1, CDKD and MAT1/At4g30820 to form the 10-subunit holoenzyme (holo-TFIIH) active in transcription. In terms of tissue distribution, expressed ubiquitously.

It localises to the nucleus. It catalyses the reaction Couples ATP hydrolysis with the unwinding of duplex DNA by translocating in the 3'-5' direction.. It carries out the reaction ATP + H2O = ADP + phosphate + H(+). In terms of biological role, ATP-dependent 3'-5' DNA helicase/translocase; binds dsDNA rather than ssDNA, unzipping it in a translocase rather than classical helicase activity. Component of the general transcription and DNA repair factor IIH (TFIIH) core complex. When complexed to CDK-activating kinase (CAK), involved in RNA transcription by RNA polymerase II. The ATPase activity of XPB/ERCC3, but not its helicase activity, is required for DNA opening; it may wrap around the damaged DNA wedging it open, causing localized melting and twisting that allows XPD/ERCC2 helicase to anchor. The ATP-dependent helicase activity of XPB/ERCC3 may be required for promoter escape. Also involved in transcription-coupled nucleotide excision repair (NER) of damaged DNA. In NER, TFIIH acts by opening DNA around the lesion to allow the excision of the damaged oligonucleotide and its replacement by a new DNA fragment. The structure of the TFIIH transcription complex differs from the NER-TFIIH complex. Partially complements UV sensitivity of a yeast SSL2 mutation. Required during the early stages of development, including seed germination. The polypeptide is General transcription and DNA repair factor IIH helicase/translocase subunit XPB1 (XPB1) (Arabidopsis thaliana (Mouse-ear cress)).